We begin with the raw amino-acid sequence, 216 residues long: RNA pyrophosphohydrolase (216 aa).

The Nudix hydrolase domain maps to 6–149; the sequence is GFRPNVGIIL…KRDVYQLALT (144 aa). The short motif at 38 to 59 is the Nudix box element; the sequence is GGIKYGETPMQAMYRELHEETG. The interval 159-191 is disordered; it reads AQRTDKSRGPRAPRYPRVANGHAASETPAAIDT.

This sequence belongs to the Nudix hydrolase family. RppH subfamily. The cofactor is a divalent metal cation.

Its function is as follows. Accelerates the degradation of transcripts by removing pyrophosphate from the 5'-end of triphosphorylated RNA, leading to a more labile monophosphorylated state that can stimulate subsequent ribonuclease cleavage. This is RNA pyrophosphohydrolase from Burkholderia pseudomallei (strain 668).